The sequence spans 273 residues: SUMO-1 cysteine protease S273R (273 aa).

Active-site residues include His-168 and Asn-187. Position 226 (Gln-226) interacts with substrate. The active-site Nucleophile is the Cys-232.

This sequence belongs to the peptidase C63 family.

It is found in the host cytoplasm. The protein resides in the virion. In terms of biological role, cysteine protease that plays several role during infection including processing of the structural polyprotein or inhibition of the host immune response. Catalyzes the maturation of the pp220 and pp62 polyprotein precursors into core-shell proteins. Plays a role in the disruption of host pyroptosis via specific cleavage of gasdermin D/GSDMD. In addition, strongly decreases the host cGAS-STING signaling by targeting IKBKE via its enzymatic activity. Also impairs host FOXJ1-mediated antiviral effect via degradation of FOXJ1. In Ornithodoros (relapsing fever ticks), this protein is SUMO-1 cysteine protease S273R.